Reading from the N-terminus, the 401-residue chain is MAKRSLASLNAGDLSGKRVLVRVDFNVPLNDTGAITDDTRIRAALPTINDLIGKGAKVILSAHFGRPKGQVNDAMRLTPVAARLSELLGKPVAKTDSCIGPDAEAKVGAMANGDVVLLENVRFFAEEEKNEAGFAEKLAGLAEVYVNDAFGAAHRAHASTEGVTKFLKPSVAGFLMEKELQYLQGAVDEPKRPLAAIVGGSKVSSKIGVLDTLIDKCDKVLIGGGMIFTFYKARGLSVGKSLVEEDKLELAKELEAKAKANGVQLLLPTDVVLADNFAPDANSQTADINAIPDGWMGLDIGPDSIKVFQEALADCQTVIWNGPMGVFEFDKFATGTNSIATTLADLSGKGCCTIIGGGDSVAAVEKAGLAEKMSHISTGGGASLELLEGKVLPGVAALDAA.

Substrate contacts are provided by residues 24 to 26 (DFN), Arg40, 63 to 66 (HFGR), Arg122, and Arg155. ATP-binding positions include Lys206, Gly297, Glu328, and 357 to 360 (GGDS).

Belongs to the phosphoglycerate kinase family. Monomer.

The protein resides in the cytoplasm. The catalysed reaction is (2R)-3-phosphoglycerate + ATP = (2R)-3-phospho-glyceroyl phosphate + ADP. It functions in the pathway carbohydrate degradation; glycolysis; pyruvate from D-glyceraldehyde 3-phosphate: step 2/5. This Synechococcus sp. (strain CC9605) protein is Phosphoglycerate kinase.